The following is a 352-amino-acid chain: C-C chemokine receptor type 5 (352 aa).

The Extracellular portion of the chain corresponds to 1–30; that stretch reads MDYQVSSPTYDIDYYTSEPCQKINVKQIAA. Position 3 is a sulfotyrosine (tyrosine 3). 2 O-linked (GalNAc...) serine glycosylation sites follow: serine 6 and serine 7. Residues tyrosine 10, tyrosine 14, and tyrosine 15 each carry the sulfotyrosine modification. Cystine bridges form between cysteine 20–cysteine 269 and cysteine 101–cysteine 178. Residues 31-58 form a helical membrane-spanning segment; that stretch reads RLLPPLYSLVFIFGFVGNMLVILILINC. The Cytoplasmic portion of the chain corresponds to 59–68; it reads KRLKSMTDIY. A helical transmembrane segment spans residues 69 to 89; that stretch reads LLNLAISDLFFLLTVPFWAHY. Over 90–102 the chain is Extracellular; it reads AAAQWDFGNTMCQ. The chain crosses the membrane as a helical span at residues 103–124; it reads LLTGLYFIGFFSGIFFIILLTI. Over 125 to 141 the chain is Cytoplasmic; sequence DRYLAIVHAVFALKART. The helical transmembrane segment at 142 to 166 threads the bilayer; the sequence is VTFGVVTSVITWVVAVFASLPGIIF. At 167–198 the chain is on the extracellular side; the sequence is TRSQKEGLHYTCSSHFPYSQYQFWKNFQTLKI. A helical transmembrane segment spans residues 199-218; the sequence is VILGLVLPLLVMVICYSGIL. The Cytoplasmic segment spans residues 219–235; it reads KTLLRCRNEKKRHRAVR. A helical transmembrane segment spans residues 236 to 260; the sequence is LIFTIMIVYFLFWAPYNIVLLLNTF. Residues 261–277 lie on the Extracellular side of the membrane; that stretch reads QEFFGLNNCSSSNRLDQ. A helical membrane pass occupies residues 278–301; it reads AMQVTETLGMTHCCINPIIYAFVG. Topologically, residues 302-352 are cytoplasmic; it reads EKFRNYLLVFFQKHIAKHFCKCCSIFQQEAPERASSVYTRSTGEQEISVGL. Residues cysteine 321, cysteine 323, and cysteine 324 are each lipidated (S-palmitoyl cysteine). Phosphoserine; by BARK1 occurs at positions 336, 337, 342, and 349.

The protein belongs to the G-protein coupled receptor 1 family. As to quaternary structure, interacts with PRAF2. Efficient ligand binding to CCL3/MIP-1alpha and CCL4/MIP-1beta requires sulfation, O-glycosylation and sialic acid modifications. Glycosylation on Ser-6 is required for efficient binding of CCL4. Interacts with GRK2. Interacts with ARRB1 and ARRB2. Interacts with CNIH4. Interacts with S100A4; this interaction stimulates T-lymphocyte chemotaxis. Sulfated on at least 2 of the N-terminal tyrosines. Sulfation is required for efficient binding of the chemokines, CCL3 and CCL4. Post-translationally, palmitoylation in the C-terminal is important for cell surface expression. In terms of processing, phosphorylation on serine residues in the C-terminal is stimulated by binding CC chemokines especially by APO-RANTES. O-glycosylated, but not N-glycosylated. Ser-6 appears to be the major site even if Ser-7 may be also O-glycosylated. Also sialylated glycans present which contribute to chemokine binding. Thr-16 and Ser-17 may also be glycosylated and, if so, with small moieties such as a T-antigen.

Its subcellular location is the cell membrane. Functionally, receptor for a number of inflammatory CC-chemokines including CCL3/MIP-1-alpha, CCL4/MIP-1-beta and RANTES and subsequently transduces a signal by increasing the intracellular calcium ion level. May play a role in the control of granulocytic lineage proliferation or differentiation. Participates in T-lymphocyte migration to the infection site by acting as a chemotactic receptor. This is C-C chemokine receptor type 5 (CCR5) from Symphalangus syndactylus (Siamang).